A 112-amino-acid polypeptide reads, in one-letter code: Large ribosomal subunit protein uL22 (112 aa).

It belongs to the universal ribosomal protein uL22 family. As to quaternary structure, part of the 50S ribosomal subunit.

Its function is as follows. This protein binds specifically to 23S rRNA; its binding is stimulated by other ribosomal proteins, e.g. L4, L17, and L20. It is important during the early stages of 50S assembly. It makes multiple contacts with different domains of the 23S rRNA in the assembled 50S subunit and ribosome. Functionally, the globular domain of the protein is located near the polypeptide exit tunnel on the outside of the subunit, while an extended beta-hairpin is found that lines the wall of the exit tunnel in the center of the 70S ribosome. The sequence is that of Large ribosomal subunit protein uL22 from Mesoplasma florum (strain ATCC 33453 / NBRC 100688 / NCTC 11704 / L1) (Acholeplasma florum).